The sequence spans 405 residues: Solute carrier family 35 member E2B (405 aa).

The segment at 1 to 28 (MSSSVKTPALEELVPGSEEKPKGRSPLS) is disordered. Helical transmembrane passes span 81-101 (LWFFFSFCTLFLNKYILSLLG), 106-126 (MLGAVQMLSTTVIGCVKTLVP), 142-162 (FLMTMLFVGLMRFATVVLGLV), 167-187 (VAVSFAETVKSSAPIFTVIMS), 195-215 (TGLLVNLSLIPVMGGLALCTA), 219-241 (SFNVLGFSAALSTNIMDCLQNVF), 264-284 (AAAVAMLVPARVFFTDVPVIG), 296-316 (VVLLLLTDGVLFHLQSVTAYA), 326-346 (FSVASTVKHALSIWLSVIVFG), and 347-367 (NKITSLSAVGTALVTVGVLLY). The tract at residues 380–405 (SLAAATGRAPDDTVEPLLPQDPRQHP) is disordered.

This sequence belongs to the TPT transporter family. SLC35E subfamily.

It localises to the membrane. Functionally, putative transporter. This is Solute carrier family 35 member E2B (SLC35E2B) from Homo sapiens (Human).